Reading from the N-terminus, the 356-residue chain is Protein-glutamate methylesterase/protein-glutamine glutaminase (356 aa).

The Response regulatory domain maps to 4–121 (KVLIVDDSAL…QSGMLEYTDL (118 aa)). The residue at position 55 (Asp55) is a 4-aspartylphosphate. One can recognise a CheB-type methylesterase domain in the interval 156 to 349 (PLTSSEKLII…RRVLEFFAAH (194 aa)). Active-site residues include Ser169, His195, and Asp291.

This sequence belongs to the CheB family. In terms of processing, phosphorylated by CheA. Phosphorylation of the N-terminal regulatory domain activates the methylesterase activity.

It localises to the cytoplasm. It carries out the reaction [protein]-L-glutamate 5-O-methyl ester + H2O = L-glutamyl-[protein] + methanol + H(+). The enzyme catalyses L-glutaminyl-[protein] + H2O = L-glutamyl-[protein] + NH4(+). Its function is as follows. Involved in chemotaxis. Part of a chemotaxis signal transduction system that modulates chemotaxis in response to various stimuli. Catalyzes the demethylation of specific methylglutamate residues introduced into the chemoreceptors (methyl-accepting chemotaxis proteins or MCP) by CheR. Also mediates the irreversible deamidation of specific glutamine residues to glutamic acid. The protein is Protein-glutamate methylesterase/protein-glutamine glutaminase of Thiobacillus denitrificans (strain ATCC 25259 / T1).